A 218-amino-acid polypeptide reads, in one-letter code: Non-structural protein NS3 (218 aa).

This sequence belongs to the orbivirus NS3 family.

Its function is as follows. May play a role in the release of virions from infected cells. This Camelus dromedarius (Dromedary) protein is Non-structural protein NS3 (Segment-10).